The chain runs to 362 residues: Putative transport protein BB_0006 (362 aa).

A run of 8 helical transmembrane segments spans residues 20-40 (FYCI…EAVF), 43-63 (LAIS…LARF), 68-88 (FLIV…IFSF), 144-164 (EIIG…FLLS), 212-232 (ILVF…WAVL), 234-254 (FVFN…IVIT), 265-285 (IVLY…NILE), and 304-326 (LFFW…TVIV).

It belongs to the autoinducer-2 exporter (AI-2E) (TC 2.A.86) family.

The protein localises to the cell membrane. This Borreliella burgdorferi (strain ATCC 35210 / DSM 4680 / CIP 102532 / B31) (Borrelia burgdorferi) protein is Putative transport protein BB_0006.